The primary structure comprises 319 residues: Probable alcohol dehydrogenase (319 aa).

Residues Cys-18, His-39, Cys-68, Cys-71, Cys-74, Cys-82, and Cys-149 each coordinate Zn(2+).

The protein belongs to the zinc-containing alcohol dehydrogenase family. The cofactor is Zn(2+).

It catalyses the reaction a primary alcohol + NAD(+) = an aldehyde + NADH + H(+). The enzyme catalyses a secondary alcohol + NAD(+) = a ketone + NADH + H(+). In Pseudomonas sp, this protein is Probable alcohol dehydrogenase (terPD).